An 80-amino-acid polypeptide reads, in one-letter code: Calmodulin (80 aa).

EF-hand domains are found at residues 12-47 and 48-80; these read DSEE…LGEK and LTDE…MTSK. Residues aspartate 25, aspartate 27, asparagine 29, glutamate 36, aspartate 61, aspartate 63, aspartate 65, glutamine 67, and glutamate 72 each coordinate Ca(2+).

The protein belongs to the calmodulin family.

Its function is as follows. Calmodulin mediates the control of a large number of enzymes, ion channels and other proteins by Ca(2+). Among the enzymes to be stimulated by the calmodulin-Ca(2+) complex are a number of protein kinases and phosphatases. In Strongylocentrotus purpuratus (Purple sea urchin), this protein is Calmodulin.